A 170-amino-acid polypeptide reads, in one-letter code: RNA pyrophosphohydrolase (170 aa).

The Nudix hydrolase domain maps to Gly6–Lys149. Positions Gly38–Gly59 match the Nudix box motif.

The protein belongs to the Nudix hydrolase family. RppH subfamily. It depends on a divalent metal cation as a cofactor.

Its function is as follows. Accelerates the degradation of transcripts by removing pyrophosphate from the 5'-end of triphosphorylated RNA, leading to a more labile monophosphorylated state that can stimulate subsequent ribonuclease cleavage. This chain is RNA pyrophosphohydrolase, found in Aliivibrio fischeri (strain ATCC 700601 / ES114) (Vibrio fischeri).